The chain runs to 88 residues: Small ribosomal subunit protein bS16 (88 aa).

It belongs to the bacterial ribosomal protein bS16 family.

The protein is Small ribosomal subunit protein bS16 of Thermus aquaticus.